The following is a 203-amino-acid chain: Mpv17-like protein (203 aa).

The Cytoplasmic portion of the chain corresponds to 1 to 12; it reads MRILIQFTKRHP. Residues 13 to 30 form a helical membrane-spanning segment; sequence WLTNVTIYGSLFASADIV. The Lumenal segment spans residues 31–49; sequence QQKLSKSPTEPIDFKQTAK. The helical transmembrane segment at 50-69 threads the bilayer; it reads VGLVGFCFHANFNFFWLRFI. Residues 70-89 are Cytoplasmic-facing; sequence ERTFPGSAPLNVIRKVACDQ. The helical transmembrane segment at 90–107 threads the bilayer; sequence LMAAPITISAFYTGLSLL. Residues 108–143 lie on the Lumenal side of the membrane; sequence DGERDVFKNLKEKFWPTYKTGVMCWTVFQTINFSVI. A helical membrane pass occupies residues 144-166; that stretch reads PPFVRTAYIGVCAFLWTTFLCYI. Over 167–203 the chain is Cytoplasmic; that stretch reads RNRDINEVTTRLLHAVPNIRGKMAFPQDQDDNKPADK.

Belongs to the peroxisomal membrane protein PXMP2/4 family.

Its subcellular location is the peroxisome membrane. In terms of biological role, participates in reactive oxygen species metabolism by up- or down-regulation of the genes of antioxidant enzymes. Protective against the mitochondrial apoptotic cascade. The chain is Mpv17-like protein (mpv17l) from Xenopus laevis (African clawed frog).